Here is a 1265-residue protein sequence, read N- to C-terminus: Kinesin-related protein 13 (1265 aa).

The Kinesin motor domain maps to 23–350 (NIQAFVRVRP…LEYALKAKNI (328 aa)). 106-113 (GQTGTGKT) contacts ATP. Positions 331–459 (LVNLEETINT…KQQQEKQKFI (129 aa)) form a coiled coil. Disordered regions lie at residues 918–1026 (KSGE…QPLI), 1085–1119 (SLVN…LSQL), 1127–1146 (LQPQ…LNGS), 1158–1214 (LLDD…NQSL), and 1245–1265 (FGGG…TPLK). A compositionally biased stretch (low complexity) spans 930-951 (IPSPISTSSSSSSSSSISSIHS). Polar residues-rich tracts occupy residues 960–980 (HQSI…SINC), 1003–1026 (LNLN…QPLI), and 1085–1097 (SLVN…SPKL). 2 stretches are compositionally biased toward low complexity: residues 1100–1119 (QKIL…LSQL) and 1128–1146 (QPQQ…LNGS). Positions 1158 to 1169 (LLDDDSDSDNSD) are enriched in acidic residues. The segment covering 1174–1195 (SLLSSNKKSSRASKNAVVSKKV) has biased composition (low complexity). Positions 1250–1265 (TISSKLKSLKQQTPLK) are enriched in polar residues.

Belongs to the TRAFAC class myosin-kinesin ATPase superfamily. Kinesin family. BimC subfamily.

It is found in the cytoplasm. Its subcellular location is the cytoskeleton. In terms of biological role, microtubule-associated force-producing protein that plays a role in organelle transport. Its motor activity is directed toward the microtubule's plus end. Cooperates with dynein to control the spindle elongation rate, but is dispensable for mitosis. This chain is Kinesin-related protein 13 (kif13), found in Dictyostelium discoideum (Social amoeba).